A 103-amino-acid chain; its full sequence is Signal recognition particle 19 kDa protein (103 aa).

It belongs to the SRP19 family. In terms of assembly, part of the signal recognition particle protein translocation system, which is composed of SRP and FtsY. Archaeal SRP consists of a 7S RNA molecule of 300 nucleotides and two protein subunits: SRP54 and SRP19.

It is found in the cytoplasm. Involved in targeting and insertion of nascent membrane proteins into the cytoplasmic membrane. Binds directly to 7S RNA and mediates binding of the 54 kDa subunit of the SRP. This is Signal recognition particle 19 kDa protein from Methanopyrus kandleri (strain AV19 / DSM 6324 / JCM 9639 / NBRC 100938).